Reading from the N-terminus, the 499-residue chain is Centrosomal protein of 57 kDa (499 aa).

Residues 1–35 (MAAASVSETSASQFSNILAEPSKSNGSMVRHSSSP) show a composition bias toward polar residues. The tract at residues 1–58 (MAAASVSETSASQFSNILAEPSKSNGSMVRHSSSPYVVYPPDKPFLNSDLRRSPNKPT) is disordered. Residue S53 is modified to Phosphoserine. The tract at residues 58–239 (TFAYPESNSR…KAAQLQTGLE (182 aa)) is centrosome localization domain (CLD). Residues 63–241 (ESNSRAIFSA…AQLQTGLEVN (179 aa)) adopt a coiled-coil conformation. The tract at residues 277 to 490 (AVQPHYRLCL…KDMQSIQNSL (214 aa)) is mediates interaction with microtubules. Disordered stretches follow at residues 334 to 357 (KQVSSRTGKSKKSATPPSSSSVNE) and 431 to 476 (KQKK…SRKN). Over residues 346–357 (SATPPSSSSVNE) the composition is skewed to low complexity. A coiled-coil region spans residues 389–450 (TVELKDNLEC…KTLDEEGNSS (62 aa)). The span at 431-444 (KQKKELKATRKTLD) shows a compositional bias: basic and acidic residues. Low complexity predominate over residues 449-459 (SSSRSTTTGTT). The segment covering 460–474 (NKKDFAKPRPGEKSR) has biased composition (basic and acidic residues).

Belongs to the translokin family. As to quaternary structure, homodimer and homooligomer. Interacts with FGF2 and RAP80. Does not interact with FGF1 or FGF2 isoform 24 kDa. Interacts with microtubules.

The protein resides in the nucleus. It localises to the cytoplasm. Its subcellular location is the cytoskeleton. It is found in the microtubule organizing center. The protein localises to the centrosome. Functionally, centrosomal protein which may be required for microtubule attachment to centrosomes. May act by forming ring-like structures around microtubules. Mediates nuclear translocation and mitogenic activity of the internalized growth factor FGF2. The chain is Centrosomal protein of 57 kDa (CEP57) from Bos taurus (Bovine).